The primary structure comprises 518 residues: MIPDVSQALAWLEKHPQALKGIQRGLERETLRVNADGTLATTGHPEALGSALTHKWITTDFAEALLEFITPVDGDIEHMLTFMRDLHRYTARNMGDERMWPLSMPCYIAEGQDIELAQYGTSNTGRFKTLYREGLKNRYGALMQTISGVHYNFSLPMAFWQAKCGDIAGADAKEKISAGYFRVIRNYYRFGWVIPYLFGASPAICSSFLQGKPTSLPFEKTECGMYYLPYATSLRLSDLGYTNKSQSNLGITFNDLYEYVAGLKQAIKTPSEEYAKIGIEKDGKRLQINSNVLQIENELYAPIRPKRVTRSGESPSDALLRGGIEYIEVRSLDINPFSPIGVDEQQVRFLDLFMVWCALADAPEMSSSELACTRVNWNRVILEGRKPGLTLGIGCETAQFPLPQVGKDLFRDLKRVAQTLDSINGGEAYQKVCDELVACFDNPDLTFSARILRSMIDTGIGGTGKAFAEAYRNLLREEPLEILREEDFVAEREASERRQQEMEAADTEPFAVWLEKHA.

It belongs to the glutamate--cysteine ligase type 1 family. Type 1 subfamily.

It carries out the reaction L-cysteine + L-glutamate + ATP = gamma-L-glutamyl-L-cysteine + ADP + phosphate + H(+). The protein operates within sulfur metabolism; glutathione biosynthesis; glutathione from L-cysteine and L-glutamate: step 1/2. The polypeptide is Glutamate--cysteine ligase (Escherichia coli O7:K1 (strain IAI39 / ExPEC)).